Consider the following 317-residue polypeptide: Succinate receptor 1 (317 aa).

The Extracellular segment spans residues 1–27 (MAQNLSCENWLALENILKKYYLSAFYG). N-linked (GlcNAc...) asparagine glycosylation is present at asparagine 4. Residues 28 to 48 (IEFIVGMLGNFTVVFGYLFCM) traverse the membrane as a helical segment. Residues 49 to 55 (KNWNSSN) lie on the Cytoplasmic side of the membrane. The chain crosses the membrane as a helical span at residues 56-76 (VYLFNLSISDLAFLCTLPMLI). Residues 77–99 (RSYATGNWTYGDVLCISNRYVLH) are Extracellular-facing. Cysteine 91 and cysteine 168 are disulfide-bonded. A helical membrane pass occupies residues 100–120 (ANLYTSILFLTFISIDRYLLM). Over 121 to 133 (KFPFREHILQKKE) the chain is Cytoplasmic. The helical transmembrane segment at 134–154 (FAILISLAVWVLVTLEVLPML) threads the bilayer. Residues 155-181 (TFITSTPIEKGDSCVDYASSGNPKYSL) lie on the Extracellular side of the membrane. A helical transmembrane segment spans residues 182 to 202 (IYSLCLTLLGFLIPLSVMCFF). Topologically, residues 203–226 (YYKMVVFLKKRSQQQATVLSLNKP) are cytoplasmic. The chain crosses the membrane as a helical span at residues 227–247 (LRLVVLAVVIFSVLFTPYHIM). Over 248-276 (RNVRIASRLDSWPQGCSQKAIKCLYILTR) the chain is Extracellular. Residues 277-297 (PLAFLNSAVNPIFYFLVGDHF) form a helical membrane-spanning segment. The Cytoplasmic segment spans residues 298–317 (RDMLFSKLRQYFKSLTSFRL).

It belongs to the G-protein coupled receptor 1 family. As to expression, expressed in retina.

The protein resides in the cell membrane. Functionally, g protein-coupled receptor for succinate able to mediate signaling through Gq/GNAQ or Gi/GNAI second messengers depending on the cell type and the processes regulated. Succinate-SUCNR1 signaling serves as a link between metabolic stress, inflammation and energy homeostasisn. In macrophages, plays a range of immune-regulatory roles. During inflammation, succinate-SUCNR1 signaling may act as an anti-inflammatory mediator or boost inflammation depending on the inflammatory status of cells. Hyperpolarizes M2 macrophages versus M1 phenotype through Gq signaling by regulating the transcription of genes involved in immune function. In activated M1 macrophages, plays a pro-inflammatory role in response to LPS. Expressed in dendritic cells, where it is involved in the sensing of immunological danger and enhances immunity. Mediates succinate triggered intracelleular calcium mobilization, induces migratory responses and acts in synergy with Toll-like receptor ligands for the production of proinflammatory cytokines as well as an enhancement of antigen-specific activation of helper T cells. In the small intestine, mediates the activation of tuft cells by dietary succinate and triggers type 2 immunity. In adipocytes, plays an important role in the control of energy metabolism. In response to succinate, controls leptin expression in an AMPK-JNK-CEBPA-dependent as well as circadian clock-regulated manner. In muscle tissue, is expressed in non-muscle cells and coordinates muscle remodeling in response to the succinate produced during exercise training in a paracrine manner. In retina, acts as a mediator of vessel growth during retinal development. In response to succinate, regulates the production of angiogenic factors, including VEGF, by retinal ganglion neurons. This chain is Succinate receptor 1 (Sucnr1), found in Rattus norvegicus (Rat).